A 299-amino-acid polypeptide reads, in one-letter code: ATP phosphoribosyltransferase (299 aa).

This sequence belongs to the ATP phosphoribosyltransferase family. Long subfamily. Mg(2+) serves as cofactor.

It localises to the cytoplasm. It carries out the reaction 1-(5-phospho-beta-D-ribosyl)-ATP + diphosphate = 5-phospho-alpha-D-ribose 1-diphosphate + ATP. It participates in amino-acid biosynthesis; L-histidine biosynthesis; L-histidine from 5-phospho-alpha-D-ribose 1-diphosphate: step 1/9. Its activity is regulated as follows. Feedback inhibited by histidine. In terms of biological role, catalyzes the condensation of ATP and 5-phosphoribose 1-diphosphate to form N'-(5'-phosphoribosyl)-ATP (PR-ATP). Has a crucial role in the pathway because the rate of histidine biosynthesis seems to be controlled primarily by regulation of HisG enzymatic activity. This chain is ATP phosphoribosyltransferase, found in Rhodopirellula baltica (strain DSM 10527 / NCIMB 13988 / SH1).